The primary structure comprises 89 residues: Small ribosomal subunit protein uS15 (89 aa).

The protein belongs to the universal ribosomal protein uS15 family. As to quaternary structure, part of the 30S ribosomal subunit. Forms a bridge to the 50S subunit in the 70S ribosome, contacting the 23S rRNA.

In terms of biological role, one of the primary rRNA binding proteins, it binds directly to 16S rRNA where it helps nucleate assembly of the platform of the 30S subunit by binding and bridging several RNA helices of the 16S rRNA. Forms an intersubunit bridge (bridge B4) with the 23S rRNA of the 50S subunit in the ribosome. This Rhizorhabdus wittichii (strain DSM 6014 / CCUG 31198 / JCM 15750 / NBRC 105917 / EY 4224 / RW1) (Sphingomonas wittichii) protein is Small ribosomal subunit protein uS15.